A 204-amino-acid chain; its full sequence is Glycerol-3-phosphate acyltransferase (204 aa).

4 helical membrane passes run 8 to 28, 76 to 96, 122 to 142, and 166 to 186; these read NAQF…LLLA, GVLV…LWGI, MGVM…VWAL, and FILH…VLLY.

Belongs to the PlsY family. Probably interacts with PlsX.

The protein localises to the cell inner membrane. The catalysed reaction is an acyl phosphate + sn-glycerol 3-phosphate = a 1-acyl-sn-glycero-3-phosphate + phosphate. It participates in lipid metabolism; phospholipid metabolism. Functionally, catalyzes the transfer of an acyl group from acyl-phosphate (acyl-PO(4)) to glycerol-3-phosphate (G3P) to form lysophosphatidic acid (LPA). This enzyme utilizes acyl-phosphate as fatty acyl donor, but not acyl-CoA or acyl-ACP. In Sulfurimonas denitrificans (strain ATCC 33889 / DSM 1251) (Thiomicrospira denitrificans (strain ATCC 33889 / DSM 1251)), this protein is Glycerol-3-phosphate acyltransferase.